We begin with the raw amino-acid sequence, 145 residues long: Transcriptional regulator MraZ (145 aa).

SpoVT-AbrB domains lie at 5–50 (TFNH…ALPQ) and 81–124 (AHEV…DRAA).

The protein belongs to the MraZ family. As to quaternary structure, forms oligomers.

The protein localises to the cytoplasm. It localises to the nucleoid. The protein is Transcriptional regulator MraZ of Anaeromyxobacter dehalogenans (strain 2CP-1 / ATCC BAA-258).